Consider the following 310-residue polypeptide: tRNA uridine(34) hydroxylase (310 aa).

One can recognise a Rhodanese domain in the interval 123-217 (ADPDVVVIDV…YLEKVPEDES (95 aa)). C177 functions as the Cysteine persulfide intermediate in the catalytic mechanism.

This sequence belongs to the TrhO family.

The enzyme catalyses uridine(34) in tRNA + AH2 + O2 = 5-hydroxyuridine(34) in tRNA + A + H2O. Its function is as follows. Catalyzes oxygen-dependent 5-hydroxyuridine (ho5U) modification at position 34 in tRNAs. The protein is tRNA uridine(34) hydroxylase of Acaryochloris marina (strain MBIC 11017).